The primary structure comprises 54 residues: H-bracotoxin-Cf4 (54 aa).

An N-terminal signal peptide occupies residues 1-21; sequence MSKLFIFFLLVALLAFVSSEA. 3 cysteine pairs are disulfide-bonded: C24–C39, C31–C43, and C38–C53.

Expressed by the venom duct.

It is found in the secreted. This endoparasitoid wasp peptide has a role in disruption of the cellular host immune response, since it reduces the capacity of D.saccharalis hemocytes to encapsulate foreign bodies. On the other hand, it shows no effect on the humoral immune response, since it has no effect on phenoloxidase activity. This is H-bracotoxin-Cf4 from Cotesia flavipes (Parasitic wasp).